A 512-amino-acid polypeptide reads, in one-letter code: 2,3-bisphosphoglycerate-independent phosphoglycerate mutase (512 aa).

Mn(2+) contacts are provided by Asp11 and Ser61. The active-site Phosphoserine intermediate is Ser61. Residues His122, 152–153, Arg184, Arg190, 259–262, and Lys332 contribute to the substrate site; these read RD and RADR. The Mn(2+) site is built by Asp399, His403, Asp440, His441, and His459.

It belongs to the BPG-independent phosphoglycerate mutase family. As to quaternary structure, monomer. Requires Mn(2+) as cofactor.

It carries out the reaction (2R)-2-phosphoglycerate = (2R)-3-phosphoglycerate. The protein operates within carbohydrate degradation; glycolysis; pyruvate from D-glyceraldehyde 3-phosphate: step 3/5. In terms of biological role, catalyzes the interconversion of 2-phosphoglycerate and 3-phosphoglycerate. In Francisella tularensis subsp. novicida (strain U112), this protein is 2,3-bisphosphoglycerate-independent phosphoglycerate mutase.